Consider the following 315-residue polypeptide: Probable cell division protein WhiA (315 aa).

Positions 278 to 312 (SLSDLAGMIEGQELTKSGINHRMRKLMQIVKELNH) form a DNA-binding region, H-T-H motif.

Belongs to the WhiA family.

Involved in cell division and chromosome segregation. The chain is Probable cell division protein WhiA from Oenococcus oeni (strain ATCC BAA-331 / PSU-1).